The sequence spans 72 residues: uncharacterized protein (72 aa).

This is an uncharacterized protein from Rickettsia conorii (strain ATCC VR-613 / Malish 7).